The chain runs to 346 residues: Phosphoribosylformylglycinamidine cyclo-ligase (346 aa).

It belongs to the AIR synthase family.

The protein localises to the cytoplasm. The enzyme catalyses 2-formamido-N(1)-(5-O-phospho-beta-D-ribosyl)acetamidine + ATP = 5-amino-1-(5-phospho-beta-D-ribosyl)imidazole + ADP + phosphate + H(+). Its pathway is purine metabolism; IMP biosynthesis via de novo pathway; 5-amino-1-(5-phospho-D-ribosyl)imidazole from N(2)-formyl-N(1)-(5-phospho-D-ribosyl)glycinamide: step 2/2. The chain is Phosphoribosylformylglycinamidine cyclo-ligase from Bacillus cereus (strain ZK / E33L).